Consider the following 120-residue polypeptide: Fumarate reductase subunit D (120 aa).

Transmembrane regions (helical) follow at residues 25–45 (FAML…LGVI), 55–75 (VAGF…ISMP), and 100–120 (IACY…IFMI).

Belongs to the FrdD family. Part of an enzyme complex containing four subunits: a flavoprotein (FrdA), an iron-sulfur protein (FrdB), and two hydrophobic anchor proteins (FrdC and FrdD).

It is found in the cell inner membrane. Functionally, anchors the catalytic components of the fumarate reductase complex to the cell membrane, binds quinones. The protein is Fumarate reductase subunit D of Aliivibrio salmonicida (strain LFI1238) (Vibrio salmonicida (strain LFI1238)).